A 396-amino-acid chain; its full sequence is Cysteine protease ATG4A (396 aa).

The Nucleophile role is filled by Cys77. Catalysis depends on residues Asp276 and His278. The LIR motif lies at 390–393; sequence FEIL.

It belongs to the peptidase C54 family. In terms of assembly, interacts with ATG9A; the interaction is direct.

The protein resides in the cytoplasm. The catalysed reaction is [protein]-C-terminal L-amino acid-glycyl-phosphatidylethanolamide + H2O = [protein]-C-terminal L-amino acid-glycine + a 1,2-diacyl-sn-glycero-3-phosphoethanolamine. With respect to regulation, inhibited by N-ethylmaleimide. Redox-regulated during autophagy since reducing conditions activate ATG4A whereas an oxidizing environment such as the presence of H(2)O(2) inhibits its activity. Its function is as follows. Cysteine protease that plays a key role in autophagy by mediating both proteolytic activation and delipidation of ATG8 family proteins. The protease activity is required for proteolytic activation of ATG8 family proteins: cleaves the C-terminal amino acid of ATG8 proteins to reveal a C-terminal glycine. Exposure of the glycine at the C-terminus is essential for ATG8 proteins conjugation to phosphatidylethanolamine (PE) and insertion to membranes, which is necessary for autophagy. Preferred substrate is GABARAPL2 followed by MAP1LC3A and GABARAP. Protease activity is also required to counteract formation of high-molecular weight conjugates of ATG8 proteins (ATG8ylation): acts as a deubiquitinating-like enzyme that removes ATG8 conjugated to other proteins, such as ATG3. In addition to the protease activity, also mediates delipidation of ATG8 family proteins. Catalyzes delipidation of PE-conjugated forms of ATG8 proteins during macroautophagy. Compared to ATG4B, the major protein for proteolytic activation of ATG8 proteins, shows weaker ability to cleave the C-terminal amino acid of ATG8 proteins, while it displays stronger delipidation activity. Involved in phagophore growth during mitophagy independently of its protease activity and of ATG8 proteins: acts by regulating ATG9A trafficking to mitochondria and promoting phagophore-endoplasmic reticulum contacts during the lipid transfer phase of mitophagy. The sequence is that of Cysteine protease ATG4A from Mus musculus (Mouse).